Reading from the N-terminus, the 565-residue chain is CTP synthase (565 aa).

The tract at residues M1–L272 is amidoligase domain. S18 contributes to the CTP binding site. S18 serves as a coordination point for UTP. S19–I24 contributes to the ATP binding site. Y59 is a binding site for L-glutamine. D76 provides a ligand contact to ATP. Mg(2+) contacts are provided by D76 and E146. Residues D153 to E155, K193 to Q198, and K229 contribute to the CTP site. UTP contacts are provided by residues K193–Q198 and K229. The Glutamine amidotransferase type-1 domain maps to T299 to G543. An L-glutamine-binding site is contributed by G363. C390 serves as the catalytic Nucleophile; for glutamine hydrolysis. Residues L391 to Q394, E414, and R471 contribute to the L-glutamine site. Catalysis depends on residues H516 and E518.

It belongs to the CTP synthase family. Homotetramer.

The enzyme catalyses UTP + L-glutamine + ATP + H2O = CTP + L-glutamate + ADP + phosphate + 2 H(+). It carries out the reaction L-glutamine + H2O = L-glutamate + NH4(+). The catalysed reaction is UTP + NH4(+) + ATP = CTP + ADP + phosphate + 2 H(+). It participates in pyrimidine metabolism; CTP biosynthesis via de novo pathway; CTP from UDP: step 2/2. With respect to regulation, allosterically activated by GTP, when glutamine is the substrate; GTP has no effect on the reaction when ammonia is the substrate. The allosteric effector GTP functions by stabilizing the protein conformation that binds the tetrahedral intermediate(s) formed during glutamine hydrolysis. Inhibited by the product CTP, via allosteric rather than competitive inhibition. Catalyzes the ATP-dependent amination of UTP to CTP with either L-glutamine or ammonia as the source of nitrogen. Regulates intracellular CTP levels through interactions with the four ribonucleotide triphosphates. The chain is CTP synthase from Chlorobaculum parvum (strain DSM 263 / NCIMB 8327) (Chlorobium vibrioforme subsp. thiosulfatophilum).